We begin with the raw amino-acid sequence, 758 residues long: Transmembrane E3 ubiquitin-protein ligase 1 (758 aa).

Positions 1 to 26 (MEIDGNTLVFIIVILFLFFSSPGGDG) are cleaved as a signal peptide. At 27–398 (VSSQYEFNQL…YELKIMSIRK (372 aa)) the chain is on the lumenal side. A helical membrane pass occupies residues 399–419 (HLLFGIALFAAQIYLLLTQMH). Residues 420 to 431 (HTNTPSMVNKIS) are Cytoplasmic-facing. The helical transmembrane segment at 432–452 (FYCFSMINLVDGSLATLYFVA) threads the bilayer. The Lumenal segment spans residues 453-458 (ASVVPE). A helical membrane pass occupies residues 459–479 (LYLPLVISAFSCFILASIFEI). Residues 480–523 (RYLISIYASQVNEQNVGIINLLRGNTGTYDENRPRPAFIPDEGS) lie on the Cytoplasmic side of the membrane. A helical transmembrane segment spans residues 524 to 544 (IGGSLYGRFFFMLIIFTFLIL). Residues 545–553 (SSTSWPRQL) are Lumenal-facing. The chain crosses the membrane as a helical span at residues 554 to 574 (RMVFEYILIFILNSYWIPQIF). Residues 575–602 (RNAVKGIPSRRERARSSIGGNRSQNKMP) lie on the Cytoplasmic side of the membrane. Residues 603-623 (LLWSFVIGTTIIRSLPVVYVF) traverse the membrane as a helical segment. Residues 624 to 635 (TYSSNVFRHHKD) are Lumenal-facing. Residues 636–656 (VHFVVFLSLWLLFQISILYSQ) form a helical membrane-spanning segment. The Cytoplasmic segment spans residues 657 to 758 (DVLGSRWFLP…PVCRSPLPPL (102 aa)). An RING-type; atypical zinc finger spans residues 699-752 (CAICMSDVPIYIEEIPETHKVDQHSYMVTPCNHVFHTSCLENWMNYKLQCPVCR).

As to quaternary structure, component of the DSC E3 ligase complexes composed of at least TUL1, DSC2, DSC3, UBX3, CDC48 as well as VLD1 for the vacuole-localized complex or GLD1 for the Golgi/endosome-localized complex. Interacts with UBC4.

It is found in the golgi apparatus membrane. It carries out the reaction S-ubiquitinyl-[E2 ubiquitin-conjugating enzyme]-L-cysteine + [acceptor protein]-L-lysine = [E2 ubiquitin-conjugating enzyme]-L-cysteine + N(6)-ubiquitinyl-[acceptor protein]-L-lysine.. It functions in the pathway protein modification; protein ubiquitination. Functionally, catalytic component of the DSC E3 ubiquitin ligase complexes that tag proteins present in Golgi, endosome and vacuole membranes and function in protein homeostasis under non-stress conditions and support a role in protein quality control. Mediates ubiquitination of vacuolar proteins such as CPS1, PPN1, PEP12 and other proteins containing exposed hydrophilic residues within their transmembrane domains, leading to their sorting into internal vesicles in late endosomes. Targets also the unpalmitoylated endosomal SNARE TLG1 to the MVB pathway. This chain is Transmembrane E3 ubiquitin-protein ligase 1 (TUL1), found in Saccharomyces cerevisiae (strain ATCC 204508 / S288c) (Baker's yeast).